Here is a 280-residue protein sequence, read N- to C-terminus: Elongation factor 1-delta (280 aa).

A2 is modified (N-acetylalanine). The residue at position 17 (K17) is an N6-acetyllysine. Residues S37, S44, S60, S86, and S106 each carry the phosphoserine modification. The residue at position 107 (K107) is an N6-acetyllysine. Positions 113–171 (SALEKSSPAHRATTPQTQHVSPMRQVEPPSRKAATATEDDEDDDIDLFGSDEEEDKEAT) are disordered. N6-acetyllysine; alternate is present on K117. K117 is modified (N6-succinyllysine; alternate). Residue S119 is modified to Phosphoserine. T129 is subject to Phosphothreonine. A Phosphoserine modification is found at S133. Position 147 is a phosphothreonine (T147). A compositionally biased stretch (acidic residues) spans 149–168 (TEDDEDDDIDLFGSDEEEDK). The residue at position 162 (S162) is a Phosphoserine; by CK2.

The protein belongs to the EF-1-beta/EF-1-delta family. As to quaternary structure, EF-1 is composed of 4 subunits: alpha, beta, delta, and gamma.

EF-1-beta and EF-1-delta stimulate the exchange of GDP bound to EF-1-alpha to GTP. This Bos taurus (Bovine) protein is Elongation factor 1-delta (EEF1D).